Reading from the N-terminus, the 492-residue chain is Cobyric acid synthase (492 aa).

In terms of domain architecture, GATase cobBQ-type spans 252-440 (RPKIAVLAYP…VHGLFADDHL (189 aa)). The active-site Nucleophile is C334. The active site involves H432.

The protein belongs to the CobB/CobQ family. CobQ subfamily.

It participates in cofactor biosynthesis; adenosylcobalamin biosynthesis. Functionally, catalyzes amidations at positions B, D, E, and G on adenosylcobyrinic A,C-diamide. NH(2) groups are provided by glutamine, and one molecule of ATP is hydrogenolyzed for each amidation. The sequence is that of Cobyric acid synthase from Bradyrhizobium sp. (strain BTAi1 / ATCC BAA-1182).